We begin with the raw amino-acid sequence, 150 residues long: Arginine repressor (150 aa).

This sequence belongs to the ArgR family.

The protein resides in the cytoplasm. It participates in amino-acid biosynthesis; L-arginine biosynthesis [regulation]. Regulates arginine biosynthesis genes. The chain is Arginine repressor from Clostridium botulinum (strain Loch Maree / Type A3).